Here is a 122-residue protein sequence, read N- to C-terminus: Large ribosomal subunit protein uL14 (122 aa).

This sequence belongs to the universal ribosomal protein uL14 family. As to quaternary structure, part of the 50S ribosomal subunit. Forms a cluster with proteins L3 and L19. In the 70S ribosome, L14 and L19 interact and together make contacts with the 16S rRNA in bridges B5 and B8.

Functionally, binds to 23S rRNA. Forms part of two intersubunit bridges in the 70S ribosome. The protein is Large ribosomal subunit protein uL14 of Nautilia profundicola (strain ATCC BAA-1463 / DSM 18972 / AmH).